The sequence spans 178 residues: ATP-dependent protease subunit HslV (178 aa).

Threonine 7 is a catalytic residue. 3 residues coordinate Na(+): glycine 162, cysteine 165, and threonine 168.

It belongs to the peptidase T1B family. HslV subfamily. As to quaternary structure, a double ring-shaped homohexamer of HslV is capped on each side by a ring-shaped HslU homohexamer. The assembly of the HslU/HslV complex is dependent on binding of ATP.

It is found in the cytoplasm. It catalyses the reaction ATP-dependent cleavage of peptide bonds with broad specificity.. Its activity is regulated as follows. Allosterically activated by HslU binding. Protease subunit of a proteasome-like degradation complex believed to be a general protein degrading machinery. The sequence is that of ATP-dependent protease subunit HslV from Cupriavidus metallidurans (strain ATCC 43123 / DSM 2839 / NBRC 102507 / CH34) (Ralstonia metallidurans).